A 231-amino-acid chain; its full sequence is Large ribosomal subunit protein uL1 (231 aa).

The protein belongs to the universal ribosomal protein uL1 family. In terms of assembly, part of the 50S ribosomal subunit.

In terms of biological role, binds directly to 23S rRNA. The L1 stalk is quite mobile in the ribosome, and is involved in E site tRNA release. Protein L1 is also a translational repressor protein, it controls the translation of the L11 operon by binding to its mRNA. In Pseudomonas syringae pv. tomato (strain ATCC BAA-871 / DC3000), this protein is Large ribosomal subunit protein uL1.